Consider the following 180-residue polypeptide: Large ribosomal subunit protein uL5 (180 aa).

It belongs to the universal ribosomal protein uL5 family. As to quaternary structure, part of the 50S ribosomal subunit; part of the 5S rRNA/L5/L18/L25 subcomplex. Contacts the 5S rRNA and the P site tRNA. Forms a bridge to the 30S subunit in the 70S ribosome.

Functionally, this is one of the proteins that bind and probably mediate the attachment of the 5S RNA into the large ribosomal subunit, where it forms part of the central protuberance. In the 70S ribosome it contacts protein S13 of the 30S subunit (bridge B1b), connecting the 2 subunits; this bridge is implicated in subunit movement. Contacts the P site tRNA; the 5S rRNA and some of its associated proteins might help stabilize positioning of ribosome-bound tRNAs. The sequence is that of Large ribosomal subunit protein uL5 from Xanthomonas campestris pv. campestris (strain 8004).